Here is a 528-residue protein sequence, read N- to C-terminus: Beta-hexosaminidase subunit alpha (528 aa).

The first 22 residues, Met-1 to Ala-22, serve as a signal peptide directing secretion. Positions Leu-23–Gln-88 are excised as a propeptide. Residues Cys-58 and Cys-104 are joined by a disulfide bond. Residues Asn-115, Asn-157, and Asn-295 are each glycosylated (N-linked (GlcNAc...) asparagine). Cys-277 and Cys-328 are oxidised to a cystine. Glu-323 (proton donor) is an active-site residue. A critical for hydrolysis GM2 gangliosides region spans residues Asn-422 to Arg-423. The N-linked (GlcNAc...) asparagine glycan is linked to Asn-487. An intrachain disulfide couples Cys-504 to Cys-521.

Belongs to the glycosyl hydrolase 20 family. As to quaternary structure, there are 3 beta-hexosaminidase isozymes: isozyme A (hexosaminidase A) is a heterodimer composed of one subunit alpha and one subunit beta (chain A and B); isozyme B (hexosaminidase B) is a homodimer of two beta subunits (two chains A and B); isozyme S (hexosaminidase S) is a homodimer of two alpha subunits. The composition of the dimer (isozyme A versus isozyme S) has a significant effect on the substrate specificity of the alpha subunit active site. As to expression, ubiquitous. Most abundant in testis, adrenal, epididymis and heart. Low levels seen in the liver.

The protein localises to the lysosome. The enzyme catalyses Hydrolysis of terminal non-reducing N-acetyl-D-hexosamine residues in N-acetyl-beta-D-hexosaminides.. It catalyses the reaction N-acetyl-beta-D-galactosaminyl-(1-&gt;4)-beta-D-3-sulfogalactosyl-(1-&gt;4)-beta-D-glucosyl-(1&lt;-&gt;1')-ceramide + H2O = a beta-D-3-sulfogalactosyl-(1-&gt;4)-beta-D-glucosyl-(1&lt;-&gt;1')-ceramide + N-acetyl-beta-D-galactosamine. The catalysed reaction is a ganglioside GM2 (d18:1(4E)) + H2O = a ganglioside GM3 (d18:1(4E)) + N-acetyl-beta-D-galactosamine. It carries out the reaction a ganglioside GM2 + H2O = a ganglioside GM3 + N-acetyl-beta-D-galactosamine. The enzyme catalyses beta-D-GalNAc-(1-&gt;4)-alpha-L-IdoA-(1-&gt;3)-beta-D-GalNAc-4-sulfate-(1-&gt;4)-alpha-L-IdoA-(1-&gt;3)-D-GalNAc-4-sulfate + H2O = alpha-L-IdoA-(1-&gt;3)-beta-D-GalNAc-4-sulfate-(1-&gt;4)-alpha-L-IdoA-(1-&gt;3)-D-GalNAc-4-sulfate + N-acetyl-D-galactosamine. It catalyses the reaction N-acetyl-beta-D-6-sulfogalactosaminyl-(1-&gt;4)-alpha-L-iduronyl-(1-&gt;3)-N-acetyl-D-6-sulfogalactosamine + H2O = alpha-L-iduronyl-(1-&gt;3)-N-acetyl-D-6-sulfogalactosamine + N-acetyl-D-6-sulfogalactosamine. Its activity is regulated as follows. Addition of GM2A stimulates the hydrolysis of sulfated glycosphingolipid SM2 and the ganglioside GM2. Its function is as follows. Hydrolyzes the non-reducing end N-acetyl-D-hexosamine and/or sulfated N-acetyl-D-hexosamine of glycoconjugates, such as the oligosaccharide moieties from proteins and neutral glycolipids, or from certain mucopolysaccharides. The isozyme S is as active as the isozyme A on the anionic bis-sulfated glycans, the chondroitin-6-sulfate trisaccharide (C6S-3), and the dermatan sulfate pentasaccharide, and the sulfated glycosphingolipid SM2. The isozyme B does not hydrolyze each of these substrates, however hydrolyzes efficiently neutral oligosaccharide. Only the isozyme A is responsible for the degradation of GM2 gangliosides in the presence of GM2A. The polypeptide is Beta-hexosaminidase subunit alpha (Mus musculus (Mouse)).